A 255-amino-acid polypeptide reads, in one-letter code: Hydroxyacylglutathione hydrolase (255 aa).

Zn(2+) is bound by residues histidine 56, histidine 58, aspartate 60, histidine 61, histidine 114, aspartate 133, and histidine 171.

This sequence belongs to the metallo-beta-lactamase superfamily. Glyoxalase II family. Monomer. Requires Zn(2+) as cofactor.

It carries out the reaction an S-(2-hydroxyacyl)glutathione + H2O = a 2-hydroxy carboxylate + glutathione + H(+). Its pathway is secondary metabolite metabolism; methylglyoxal degradation; (R)-lactate from methylglyoxal: step 2/2. Thiolesterase that catalyzes the hydrolysis of S-D-lactoyl-glutathione to form glutathione and D-lactic acid. In Rhodopseudomonas palustris (strain ATCC BAA-98 / CGA009), this protein is Hydroxyacylglutathione hydrolase.